The sequence spans 648 residues: Calpain-5 (648 aa).

The 326-residue stretch at 28 to 353 (PFVDTLFPPT…FTDISLCQLF (326 aa)) folds into the Calpain catalytic domain. Catalysis depends on residues Cys-83, His-252, and Asn-290. The domain III stretch occupies residues 354-509 (NTSVFSFSRS…VYSDEHIHFS (156 aa)). The region spanning 502-625 (SDEHIHFSPL…ENRDTTLQLT (124 aa)) is the C2 domain.

Belongs to the peptidase C2 family. It depends on Ca(2+) as a cofactor. In terms of tissue distribution, expressed in neuronal, but not in GABA-ergic neurons, intestinal, hypodermal and excretory tissues.

Its function is as follows. Required for the correct female sexual development of the soma and germline in hermaphrodite animals, while being fully dispensable in males. Has calcium-dependent proteolytic activity and is involved in the cleavage of tra-2, for which it acts as a potentiator. Capable of calcium-dependent autolysis. Part of the necrosis cell death pathway. Required for necrosis of intestinal cells induced by B.thuringiensis endotoxin Cry6Aa. The sequence is that of Calpain-5 from Caenorhabditis elegans.